Here is a 370-residue protein sequence, read N- to C-terminus: A-type ATP synthase subunit C (370 aa).

Belongs to the V-ATPase V0D/AC39 subunit family. As to quaternary structure, has multiple subunits with at least A(3), B(3), C, D, E, F, H, I and proteolipid K(x).

Its subcellular location is the cell membrane. Functionally, component of the A-type ATP synthase that produces ATP from ADP in the presence of a proton gradient across the membrane. The sequence is that of A-type ATP synthase subunit C from Pyrococcus furiosus (strain ATCC 43587 / DSM 3638 / JCM 8422 / Vc1).